Here is a 636-residue protein sequence, read N- to C-terminus: Nuclear receptor subfamily 2 group C member 1 (636 aa).

A DNA-binding region (nuclear receptor) is located at residues Val-149–Cys-224. NR C4-type zinc fingers lie at residues Cys-152–Cys-172 and Cys-188–Cys-207. The NR LBD domain occupies Glu-382–Glu-623.

The protein belongs to the nuclear hormone receptor family. NR2 subfamily.

The protein resides in the nucleus. Orphan nuclear receptor. Binds the IR7 element in the promoter of its own gene in an autoregulatory negative feedback mechanism. Primarily repressor of a broad range of genes. Binds to hormone response elements (HREs) consisting of two 5'-AGGTCA-3' half site direct repeat consensus sequences. The chain is Nuclear receptor subfamily 2 group C member 1 from Xenopus tropicalis (Western clawed frog).